The chain runs to 265 residues: tRNA pseudouridine synthase A (265 aa).

Residue Asp-58 is the Nucleophile of the active site. Tyr-116 lines the substrate pocket.

This sequence belongs to the tRNA pseudouridine synthase TruA family. Homodimer.

The enzyme catalyses uridine(38/39/40) in tRNA = pseudouridine(38/39/40) in tRNA. Its function is as follows. Formation of pseudouridine at positions 38, 39 and 40 in the anticodon stem and loop of transfer RNAs. The protein is tRNA pseudouridine synthase A of Neisseria meningitidis serogroup C / serotype 2a (strain ATCC 700532 / DSM 15464 / FAM18).